A 43-amino-acid polypeptide reads, in one-letter code: Protein PsbN 2 (43 aa).

The chain crosses the membrane as a helical span at residues 4–24; it reads ATILGISIAAALVGITVLALY.

The protein belongs to the PsbN family.

The protein resides in the cellular thylakoid membrane. Functionally, may play a role in photosystem I and II biogenesis. The sequence is that of Protein PsbN 2 from Microcystis aeruginosa (strain NIES-843 / IAM M-2473).